The following is a 164-amino-acid chain: Probable ribosome biogenesis protein RLP24 (164 aa).

The protein belongs to the eukaryotic ribosomal protein eL24 family. As to quaternary structure, associated with nucleolar and cytoplasmic pre-60S particles. At the end of biogenesis it dissociates from cytoplasmic pre-60S particles and is likely to be exchanged for its ribosomal homolog, RPL24.

Its subcellular location is the cytoplasm. The protein localises to the nucleus. Involved in the biogenesis of the 60S ribosomal subunit. Ensures the docking of nog1 to pre-60S particles. Activates and recruits ATPase AFG2 to cytoplasmic pre-60S ribosomal particles. This chain is Probable ribosome biogenesis protein RLP24 (rlp24), found in Dictyostelium discoideum (Social amoeba).